The chain runs to 372 residues: Heat-inducible transcription repressor HrcA (372 aa).

The disordered stretch occupies residues 300-334 (YGRSGAAGEPAGNDPVGEPETESETESQTNDTEPI).

Belongs to the HrcA family.

Negative regulator of class I heat shock genes (grpE-dnaK-dnaJ and groELS operons). Prevents heat-shock induction of these operons. The polypeptide is Heat-inducible transcription repressor HrcA (Bifidobacterium longum (strain NCC 2705)).